Reading from the N-terminus, the 238-residue chain is tRNA (guanine-N(1)-)-methyltransferase (238 aa).

I132–L137 provides a ligand contact to S-adenosyl-L-methionine.

This sequence belongs to the RNA methyltransferase TrmD family. Homodimer.

The protein resides in the cytoplasm. It catalyses the reaction guanosine(37) in tRNA + S-adenosyl-L-methionine = N(1)-methylguanosine(37) in tRNA + S-adenosyl-L-homocysteine + H(+). In terms of biological role, specifically methylates guanosine-37 in various tRNAs. The chain is tRNA (guanine-N(1)-)-methyltransferase from Nitrobacter hamburgensis (strain DSM 10229 / NCIMB 13809 / X14).